A 412-amino-acid chain; its full sequence is Adenosine receptor A2a (412 aa).

Topologically, residues 1 to 7 (MSTMGSW) are extracellular. Residues 8 to 32 (VYITVELAIAVLAILGNVLVCWAVW) traverse the membrane as a helical segment. The Cytoplasmic segment spans residues 33–42 (LNSNLQNVTN). Residues 43-66 (YFVVSLAAADIAVGVLAIPFAITI) traverse the membrane as a helical segment. The Extracellular segment spans residues 67 to 77 (STGFCAACHNC). 3 disulfide bridges follow: Cys71-Cys159, Cys74-Cys146, and Cys77-Cys166. Residues 78–100 (LFFACFVLVLTQSSIFSLLAIAI) form a helical membrane-spanning segment. Residues 101-120 (DRYIAIRIPLRYNGLVTGTR) are Cytoplasmic-facing. The helical transmembrane segment at 121–143 (AKGIIAVCWVLSFAIGLTPMLGW) threads the bilayer. Residues 144–173 (NNCSQPKEGRNYSQGCGEGQVACLFEDVVP) are Extracellular-facing. Residues Asn145 and Asn154 are each glycosylated (N-linked (GlcNAc...) asparagine). Glu169 is an adenosine binding site. A helical transmembrane segment spans residues 174–198 (MNYMVYYNFFAFVLVPLLLMLGVYL). Residues 199-234 (RIFLAARRQLKQMESQPLPGERARSTLQKEVHAAKS) are Cytoplasmic-facing. Residues 235-258 (LAIIVGLFALCWLPLHIINCFTFF) form a helical membrane-spanning segment. Asn253 contributes to the adenosine binding site. Cys259 and Cys262 are joined by a disulfide. Residues 259-266 (CPECSHAP) lie on the Extracellular side of the membrane. A helical transmembrane segment spans residues 267-290 (LWLMYLTIVLSHTNSVVNPFIYAY). Adenosine is bound by residues Ser277 and His278. At 291-412 (RIREFRQTFR…PLAQDGAGVS (122 aa)) the chain is on the cytoplasmic side. A disordered region spans residues 392 to 412 (GACPESPGLEGPLAQDGAGVS).

The protein belongs to the G-protein coupled receptor 1 family. As to quaternary structure, interacts (via cytoplasmic C-terminal domain) with USP4; the interaction is direct. May interact with DRD4. Interacts with NECAB2. Interacts (via cytoplasmic C-terminal domain) with GAS2L2; interaction enhances receptor-mediated adenylyl cyclase activity. Ubiquitinated. Deubiquitinated by USP4; leading to stabilization and expression at the cell surface.

It is found in the cell membrane. In terms of biological role, receptor for adenosine. The activity of this receptor is mediated by G proteins which activate adenylyl cyclase. The chain is Adenosine receptor A2a (ADORA2A) from Canis lupus familiaris (Dog).